A 203-amino-acid chain; its full sequence is MSDTVLGLVLVAAGYLAGSIPFGVVLGRFVLGVDVRQVGSGNIGATNVARAGGKKLGIAVLLLDAAKAIVPILVARWLLAGTPRAELFTVLVALAAFVGHLYPVWLGFRGGKGVATGLGIFLVLSPWAALAGAVTYGVAYGATRISSVGSLSGTAVCVLGTFVAHGWTSPVSWAGLALAALIVVRHRENIRRLVRGEEKRMRV.

Helical transmembrane passes span 5 to 25 (VLGLVLVAAGYLAGSIPFGVV), 55 to 75 (KLGIAVLLLDAAKAIVPILVA), 88 to 108 (FTVLVALAAFVGHLYPVWLGF), 114 to 134 (VATGLGIFLVLSPWAALAGAV), and 162 to 182 (FVAHGWTSPVSWAGLALAALI).

It belongs to the PlsY family. In terms of assembly, probably interacts with PlsX.

It is found in the cell inner membrane. It catalyses the reaction an acyl phosphate + sn-glycerol 3-phosphate = a 1-acyl-sn-glycero-3-phosphate + phosphate. It participates in lipid metabolism; phospholipid metabolism. Functionally, catalyzes the transfer of an acyl group from acyl-phosphate (acyl-PO(4)) to glycerol-3-phosphate (G3P) to form lysophosphatidic acid (LPA). This enzyme utilizes acyl-phosphate as fatty acyl donor, but not acyl-CoA or acyl-ACP. This chain is Glycerol-3-phosphate acyltransferase, found in Anaeromyxobacter sp. (strain Fw109-5).